The primary structure comprises 456 residues: Anthocyanidin 3-O-galactosyltransferase F3GT1 (456 aa).

Residues Ser20, His22, and Gln83 each coordinate an anthocyanidin. Catalysis depends on His22, which acts as the Proton acceptor. The Charge relay role is filled by Asp118. His150 is a binding site for an anthocyanidin. 7 residues coordinate UDP: Ser281, Trp333, Ala334, His351, Asn355, Ser356, and Glu359. Position 374 (Gly374) interacts with an anthocyanidin.

This sequence belongs to the UDP-glycosyltransferase family. In terms of tissue distribution, expressed at low levels in stems and leaves. Expressed in ovaries.

It catalyses the reaction cyanidin + UDP-alpha-D-galactose = cyanidin 3-O-beta-D-galactoside + UDP + H(+). It functions in the pathway pigment biosynthesis; anthocyanin biosynthesis. Functionally, involved in anthocyanin biosynthesis by catalyzing the galactosylation of cyanidin. Required for the accumulation of anthocyanin in red-fleshed kiwifruit varieties. Seems to be the key enzyme regulating the accumulation of anthocyanin in red-fleshed kiwi fruits. This is Anthocyanidin 3-O-galactosyltransferase F3GT1 from Actinidia chinensis var. chinensis (Chinese soft-hair kiwi).